We begin with the raw amino-acid sequence, 242 residues long: Ribonuclease 3 (242 aa).

The region spanning 12-139 is the RNase III domain; that stretch reads ANELLEALGT…LIGATFLEHG (128 aa). Glu-51 lines the Mg(2+) pocket. Asp-55 is a catalytic residue. Positions 125 and 128 each coordinate Mg(2+). Glu-128 is a catalytic residue. One can recognise a DRBM domain in the interval 165-236; that stretch reads LDWKTSLTVK…AEAGWKSLDS (72 aa).

It belongs to the ribonuclease III family. As to quaternary structure, homodimer. Mg(2+) serves as cofactor.

The protein localises to the cytoplasm. The enzyme catalyses Endonucleolytic cleavage to 5'-phosphomonoester.. Functionally, digests double-stranded RNA. Involved in the processing of primary rRNA transcript to yield the immediate precursors to the large and small rRNAs (23S and 16S). Processes some mRNAs, and tRNAs when they are encoded in the rRNA operon. Processes pre-crRNA and tracrRNA of type II CRISPR loci if present in the organism. The protein is Ribonuclease 3 of Bifidobacterium longum (strain NCC 2705).